Consider the following 277-residue polypeptide: Diaminopimelate epimerase (277 aa).

3 residues coordinate substrate: N13, Q46, and N66. C75 acts as the Proton donor in catalysis. Substrate contacts are provided by residues 76-77 (GN), N159, N192, and 210-211 (ER). The Proton acceptor role is filled by C219. Position 220 to 221 (220 to 221 (GT)) interacts with substrate.

This sequence belongs to the diaminopimelate epimerase family. In terms of assembly, homodimer.

It is found in the cytoplasm. It carries out the reaction (2S,6S)-2,6-diaminopimelate = meso-2,6-diaminopimelate. The protein operates within amino-acid biosynthesis; L-lysine biosynthesis via DAP pathway; DL-2,6-diaminopimelate from LL-2,6-diaminopimelate: step 1/1. Its function is as follows. Catalyzes the stereoinversion of LL-2,6-diaminopimelate (L,L-DAP) to meso-diaminopimelate (meso-DAP), a precursor of L-lysine and an essential component of the bacterial peptidoglycan. The sequence is that of Diaminopimelate epimerase from Aromatoleum aromaticum (strain DSM 19018 / LMG 30748 / EbN1) (Azoarcus sp. (strain EbN1)).